Here is a 255-residue protein sequence, read N- to C-terminus: Octanoyltransferase (255 aa).

A disordered region spans residues 1–21; that stretch reads MCATPVSPSPESPRSAQAGAA. Residues 56-242 form the BPL/LPL catalytic domain; sequence FETSDEIWLV…SLIANIDGIP (187 aa). Residues 96-103, 173-175, and 186-188 contribute to the substrate site; these read RGGQITYH, ALG, and GVS. Cys204 functions as the Acyl-thioester intermediate in the catalytic mechanism.

Belongs to the LipB family.

The protein resides in the cytoplasm. It catalyses the reaction octanoyl-[ACP] + L-lysyl-[protein] = N(6)-octanoyl-L-lysyl-[protein] + holo-[ACP] + H(+). Its pathway is protein modification; protein lipoylation via endogenous pathway; protein N(6)-(lipoyl)lysine from octanoyl-[acyl-carrier-protein]: step 1/2. In terms of biological role, catalyzes the transfer of endogenously produced octanoic acid from octanoyl-acyl-carrier-protein onto the lipoyl domains of lipoate-dependent enzymes. Lipoyl-ACP can also act as a substrate although octanoyl-ACP is likely to be the physiological substrate. This chain is Octanoyltransferase, found in Paraburkholderia phymatum (strain DSM 17167 / CIP 108236 / LMG 21445 / STM815) (Burkholderia phymatum).